A 218-amino-acid polypeptide reads, in one-letter code: Glutathione S-transferase class-mu 26 kDa isozyme (218 aa).

Residues 1–83 (MAPKFGYWKV…YIADKHNMLG (83 aa)) form the GST N-terminal domain. Glutathione contacts are provided by residues 7 to 8 (YW), 41 to 45 (WSNDK), 54 to 55 (NL), and 67 to 68 (QS). One can recognise a GST C-terminal domain in the interval 85–203 (CPKERAEISM…NSSRYIKWPL (119 aa)). Tyr-111 contacts substrate.

It belongs to the GST superfamily. Mu family. Homodimer. As to expression, tegument and in subtegumentary parenchymal cells. GST 26 may be actively excreted by adult worms.

The enzyme catalyses RX + glutathione = an S-substituted glutathione + a halide anion + H(+). In terms of biological role, conjugation of reduced glutathione to a wide number of exogenous and endogenous hydrophobic electrophiles. Its function is as follows. GST isoenzymes appear to play a central role in the parasite detoxification system. Other functions are also suspected including a role in increasing the solubility of haematin in the parasite gut. The protein is Glutathione S-transferase class-mu 26 kDa isozyme of Schistosoma mansoni (Blood fluke).